An 81-amino-acid polypeptide reads, in one-letter code: UPF0180 protein RBAM_013970 (81 aa).

Belongs to the UPF0180 family.

This chain is UPF0180 protein RBAM_013970, found in Bacillus velezensis (strain DSM 23117 / BGSC 10A6 / LMG 26770 / FZB42) (Bacillus amyloliquefaciens subsp. plantarum).